Here is a 555-residue protein sequence, read N- to C-terminus: Formate--tetrahydrofolate ligase (555 aa).

T65–S72 contacts ATP.

It belongs to the formate--tetrahydrofolate ligase family.

The enzyme catalyses (6S)-5,6,7,8-tetrahydrofolate + formate + ATP = (6R)-10-formyltetrahydrofolate + ADP + phosphate. The protein operates within one-carbon metabolism; tetrahydrofolate interconversion. The sequence is that of Formate--tetrahydrofolate ligase from Staphylococcus epidermidis (strain ATCC 35984 / DSM 28319 / BCRC 17069 / CCUG 31568 / BM 3577 / RP62A).